Here is a 471-residue protein sequence, read N- to C-terminus: COP9 signalosome complex subunit 1 (471 aa).

The PCI domain maps to 249 to 411 (CFLLASFDHC…KILYARDVDQ (163 aa)). Residues 445–471 (HVKSPPREGSQGELTPANSQSRMSTNM) form a disordered region. 2 positions are modified to phosphoserine: S448 and S454. Polar residues predominate over residues 456-471 (GELTPANSQSRMSTNM). At T459 the chain carries Phosphothreonine. S463 carries the post-translational modification Phosphoserine.

Belongs to the CSN1 family. Component of the CSN complex, composed of COPS1/GPS1, COPS2, COPS3, COPS4, COPS5, COPS6, COPS7 (COPS7A or COPS7B), COPS8 and COPS9. In the complex, it probably interacts directly with COPS2, COPS3, COPS4 and COPS5. Interacts directly with inositol kinase ITPK1. Interacts with CAPN8. Interacts with USP48. Interacts with ASB4; this interaction negatively regulates GPS1. In terms of tissue distribution, expressed in the base region of the oxyntic and pyloric mucosae.

Its subcellular location is the cytoplasm. It is found in the nucleus. Its function is as follows. Essential component of the COP9 signalosome complex (CSN), a complex involved in various cellular and developmental processes. The CSN complex is an essential regulator of the ubiquitin (Ubl) conjugation pathway by mediating the deneddylation of the cullin subunits of SCF-type E3 ligase complexes, leading to decrease the Ubl ligase activity of SCF-type complexes such as SCF, CSA or DDB2. The complex is also involved in phosphorylation of p53/TP53, c-jun/JUN, IkappaBalpha/NFKBIA, ITPK1 and IRF8/ICSBP, possibly via its association with CK2 and PKD kinases. CSN-dependent phosphorylation of TP53 and JUN promotes and protects degradation by the Ubl system, respectively. Suppresses G-protein- and mitogen-activated protein kinase-mediated signal transduction. The sequence is that of COP9 signalosome complex subunit 1 (Gps1) from Mus musculus (Mouse).